The sequence spans 340 residues: Undecaprenyl-phosphate 4-deoxy-4-formamido-L-arabinose transferase (340 aa).

Helical transmembrane passes span 235–255 (LSIV…ALIF) and 269–289 (LFVL…GMGL).

The protein belongs to the glycosyltransferase 2 family.

It is found in the cell inner membrane. The catalysed reaction is UDP-4-deoxy-4-formamido-beta-L-arabinose + di-trans,octa-cis-undecaprenyl phosphate = 4-deoxy-4-formamido-alpha-L-arabinopyranosyl di-trans,octa-cis-undecaprenyl phosphate + UDP. Its pathway is glycolipid biosynthesis; 4-amino-4-deoxy-alpha-L-arabinose undecaprenyl phosphate biosynthesis; 4-amino-4-deoxy-alpha-L-arabinose undecaprenyl phosphate from UDP-4-deoxy-4-formamido-beta-L-arabinose and undecaprenyl phosphate: step 1/2. It participates in bacterial outer membrane biogenesis; lipopolysaccharide biosynthesis. In terms of biological role, catalyzes the transfer of 4-deoxy-4-formamido-L-arabinose from UDP to undecaprenyl phosphate. The modified arabinose is attached to lipid A and is required for resistance to polymyxin and cationic antimicrobial peptides. This chain is Undecaprenyl-phosphate 4-deoxy-4-formamido-L-arabinose transferase, found in Pseudomonas fluorescens (strain Pf0-1).